Reading from the N-terminus, the 232-residue chain is MKIGIIGAMEEEVTLLRDKIENRQTITIGGSEIYTGQLHGVDVALLKSGIGKVAAAMGATLLLERCQPDVIINTGSAGGLASTLKVGDIVVSDEARYHDADVTAFGYEYGQLPGCPAGFKADEKLVAAAESCIKALDLNAVRGLIVSGDAFINGSVGLAKIRHNFPQAIAVEMEATAIAHVCHNFKVPFVVVRAISDVADQQSHLSFEEFLAVAARQSTLMVENLVQNLARG.

E12 serves as the catalytic Proton acceptor. Substrate-binding positions include G78, I152, and M173 to E174. D197 functions as the Proton donor in the catalytic mechanism.

This sequence belongs to the PNP/UDP phosphorylase family. MtnN subfamily. As to quaternary structure, homodimer.

The enzyme catalyses S-adenosyl-L-homocysteine + H2O = S-(5-deoxy-D-ribos-5-yl)-L-homocysteine + adenine. It catalyses the reaction S-methyl-5'-thioadenosine + H2O = 5-(methylsulfanyl)-D-ribose + adenine. It carries out the reaction 5'-deoxyadenosine + H2O = 5-deoxy-D-ribose + adenine. It functions in the pathway amino-acid biosynthesis; L-methionine biosynthesis via salvage pathway; S-methyl-5-thio-alpha-D-ribose 1-phosphate from S-methyl-5'-thioadenosine (hydrolase route): step 1/2. Catalyzes the irreversible cleavage of the glycosidic bond in both 5'-methylthioadenosine (MTA) and S-adenosylhomocysteine (SAH/AdoHcy) to adenine and the corresponding thioribose, 5'-methylthioribose and S-ribosylhomocysteine, respectively. Also cleaves 5'-deoxyadenosine, a toxic by-product of radical S-adenosylmethionine (SAM) enzymes, into 5-deoxyribose and adenine. Thus, is required for in vivo function of the radical SAM enzymes biotin synthase and lipoic acid synthase, that are inhibited by 5'-deoxyadenosine accumulation. In Klebsiella pneumoniae subsp. pneumoniae (strain ATCC 700721 / MGH 78578), this protein is 5'-methylthioadenosine/S-adenosylhomocysteine nucleosidase.